A 461-amino-acid chain; its full sequence is ATP synthase subunit beta (461 aa).

Residue 149–156 (GGAGVGKT) participates in ATP binding.

This sequence belongs to the ATPase alpha/beta chains family. As to quaternary structure, F-type ATPases have 2 components, CF(1) - the catalytic core - and CF(0) - the membrane proton channel. CF(1) has five subunits: alpha(3), beta(3), gamma(1), delta(1), epsilon(1). CF(0) has three main subunits: a(1), b(2) and c(9-12). The alpha and beta chains form an alternating ring which encloses part of the gamma chain. CF(1) is attached to CF(0) by a central stalk formed by the gamma and epsilon chains, while a peripheral stalk is formed by the delta and b chains.

It localises to the cell membrane. It catalyses the reaction ATP + H2O + 4 H(+)(in) = ADP + phosphate + 5 H(+)(out). Produces ATP from ADP in the presence of a proton gradient across the membrane. The catalytic sites are hosted primarily by the beta subunits. In Caldanaerobacter subterraneus subsp. tengcongensis (strain DSM 15242 / JCM 11007 / NBRC 100824 / MB4) (Thermoanaerobacter tengcongensis), this protein is ATP synthase subunit beta.